Here is a 118-residue protein sequence, read N- to C-terminus: uncharacterized protein (118 aa).

The N-terminal stretch at 1–18 (MSKLIFLFVVATLATIKA) is a signal peptide. Residue Asn24 is glycosylated (N-linked (GlcNAc...) asparagine; by host).

This is an uncharacterized protein from Magallana gigas (Pacific oyster).